The primary structure comprises 297 residues: Putative peptidyl-prolyl cis-trans isomerase YacD (297 aa).

Positions 1 to 32 (MKSRTIWTIILGALLVCCIAVAYTLTKSQAGA) are cleaved as a signal peptide. Residues 154–247 (DDSYRIRHIV…NGYAIIQLKE (94 aa)) form the PpiC domain.

The catalysed reaction is [protein]-peptidylproline (omega=180) = [protein]-peptidylproline (omega=0). The polypeptide is Putative peptidyl-prolyl cis-trans isomerase YacD (yacD) (Bacillus subtilis (strain 168)).